We begin with the raw amino-acid sequence, 513 residues long: MMHTFLRRLCVVALCLGYIKASADFDCRRTSQSCVTGTCNDVNGDCDCPTDANGVATHRNADCGLEIAKVVPTALCGPPCLNGGECYEPTVGTYMCMCPEAFYGNKCENPRKKVECSGTEITINYMPIPTFSGDIFILDNRNTPECAFTEANGMYTATFTYQQCGVTTTNDQPNAGDTSYEISAAVRFNANIERATDMKLTAKCVIDGTGQSNLNDNIGTVSVDQRTDLTEETALTEYQPVSFQLQGKNGNPMPVPVNLGDELRIYIPLADTGRYTKLKITELQTNNGMVEQDLVMETLIFNGCLTDIGEALVTGDISSDPAIPAIIINFMAFRLRGSPQVKFDARVQVCEGTDTSCDSVVCPSPPQSVPSNPQNIPPANPQNIPPANPQNIPPANPQISPSSSQRKRRAAPDNEVILHETLTVLDPRSNEKLRLPHNKSDIKSQQNADPQQCLQSTEIMVMVIVLIVAVVLLLVITTCLAVKFMKQRAAQVKIYNPDMPTGNNTVRIPRAAC.

The N-terminal stretch at 1 to 21 (MMHTFLRRLCVVALCLGYIKA) is a signal peptide. In terms of domain architecture, EGF-like spans 72-108 (PTALCGPPCLNGGECYEPTVGTYMCMCPEAFYGNKCE). 3 disulfides stabilise this stretch: Cys76-Cys86, Cys80-Cys96, and Cys98-Cys107. The 250-residue stretch at 115–364 (ECSGTEITIN…TSCDSVVCPS (250 aa)) folds into the ZP domain. Positions 356-411 (SCDSVVCPSPPQSVPSNPQNIPPANPQNIPPANPQNIPPANPQISPSSSQRKRRAA) are disordered. Residues 375-396 (NIPPANPQNIPPANPQNIPPAN) show a composition bias toward pro residues. 2 N-linked (GlcNAc...) asparagine glycosylation sites follow: Asn438 and Asn503.

Component of the acid-insoluble organic matrix of calcified layers of the shell (at protein level).

The protein resides in the secreted. The polypeptide is EGF-like domain-containing protein 1 (Lottia gigantea (Giant owl limpet)).